The primary structure comprises 324 residues: Fructose-1,6-bisphosphatase class 1 (324 aa).

Mg(2+)-binding residues include E88, D107, L109, and D110. Substrate-binding positions include 110-113 (DGSS), N199, and K265. E271 serves as a coordination point for Mg(2+).

This sequence belongs to the FBPase class 1 family. In terms of assembly, homotetramer. It depends on Mg(2+) as a cofactor.

The protein localises to the cytoplasm. The enzyme catalyses beta-D-fructose 1,6-bisphosphate + H2O = beta-D-fructose 6-phosphate + phosphate. The protein operates within carbohydrate biosynthesis; gluconeogenesis. The chain is Fructose-1,6-bisphosphatase class 1 from Neisseria meningitidis serogroup C (strain 053442).